The primary structure comprises 268 residues: L-cystine-binding protein TcyA (268 aa).

Residues 1–19 form the signal peptide; the sequence is MKKALLALFMVVSIAALAA. Cys-20 carries the N-palmitoyl cysteine lipid modification. Cys-20 is lipidated: S-diacylglycerol cysteine.

This sequence belongs to the bacterial solute-binding protein 3 family. As to quaternary structure, the complex is composed of two ATP-binding proteins (TcyC), two transmembrane proteins (TcyB) and a solute-binding protein (TcyA).

Its subcellular location is the cell membrane. Its function is as follows. Part of the ABC transporter complex TcyABC involved in L-cystine import. This Bacillus subtilis (strain 168) protein is L-cystine-binding protein TcyA (tcyA).